Consider the following 327-residue polypeptide: Small ribosomal subunit protein RACK1z (327 aa).

WD repeat units follow at residues 13-44 (AHTDMVTAIATPIDNADIIVSASRDKSIILWK), 61-91 (GHSHFVEDVVLSSDGQFALSGSWDGELRLWD), 103-133 (GHTKDVLSVAFSLDNRQIVSASRDRTIKLWN), 148-180 (GHRDWVSCVRFSPNTLQPTIVSASWDKTVKVWN), 192-222 (GHTGYVSTVAVSPDGSLCASGGKDGVVLLWD), 233-262 (EANSVIHALCFSPNRYWLCAATEHGIKIWD), and 293-323 (RKVIYCTSLNWSADGSTLFSGYTDGVIRVWG).

This sequence belongs to the WD repeat G protein beta family. Ribosomal protein RACK1 subfamily. Homodimer and heterodimer with RACK1B or RACK1C. Interacts with NUDT7. Interacts with GB1, MEKK1, MKK4, MKK5, MPK3 and MPK6, but not with GPA1 or MPK4. Interacts with OFUT20. As to expression, widely expressed.

The protein localises to the cytoplasm. It localises to the nucleus. Its function is as follows. Major component of the RACK1 regulatory proteins that play a role in multiple signal transduction pathways. Involved in multiple hormone responses and developmental processes. MAPK cascade scaffolding protein involved in the protease IV and ArgC signaling pathway but not the flg22 pathway. This chain is Small ribosomal subunit protein RACK1z, found in Arabidopsis thaliana (Mouse-ear cress).